The following is a 150-amino-acid chain: Large ribosomal subunit protein bL9 (150 aa).

This sequence belongs to the bacterial ribosomal protein bL9 family.

Binds to the 23S rRNA. The protein is Large ribosomal subunit protein bL9 of Pseudoalteromonas atlantica (strain T6c / ATCC BAA-1087).